The chain runs to 375 residues: MENFPTEYFLNTSVRLLEYIRYRDSNYTREERIENLHYAYNKAAHHFAQPRQQQMLKVDPKRLQASLQTIVGMVVYSWAKVSKECMADLSIHYTYTLVLDDSSDDPHPAMLNYFDDLQAGREQSHPWWALVNEHFPNVLRHFGPFCSLNLIRSTMDFFEGCWIEQYNFGGFPGSDDYPQFLRRMNGLGHCVGASLWPKDLFDERKNFLEITTAVAQMENWMVWVNDLMSFYKEFDDERDQISLVKNFVTCHEITLDEALEKLTQETLHSSKQMVAVFADKDPQVMDTIECFMHGYVTWHLCDARYRLHEIYEKVKDQDTEDAKKFCKFFEQAANVGAVAPSEWAYPQVAQLANVRAKDDMKEAQKPILSSIELVE.

This sequence belongs to the trichodiene synthase family.

It carries out the reaction (2E,6E)-farnesyl diphosphate = trichodiene + diphosphate. Its pathway is sesquiterpene biosynthesis; trichothecene biosynthesis. In terms of biological role, TS is a member of the terpene cyclase group of enzymes. It catalyzes the isomerization and cyclization of farnesyl pyro-phosphate to form trichodiene, the first cyclic intermediate in the biosynthetic pathway for trichothecenes. It serves to branch trichothecene biosynthesis from the isoprenoid pathway. The protein is Trichodiene synthase (TRI5) of Fusarium culmorum.